We begin with the raw amino-acid sequence, 235 residues long: Pro-opiomelanocortin (235 aa).

The signal sequence occupies residues 1–26 (MPRFCYSRSGALLLALLLQTSIDVWS). Phe-87 is modified (phenylalanine amide). Residues 88–126 (GPRNSSSAGSAAQRRAEEEAVWGDGSPEPSPREGKRSYS) are disordered. Over residues 90-100 (RNSSSAGSAAQ) the composition is skewed to low complexity. Residue Asn-91 is glycosylated (N-linked (GlcNAc...) asparagine). Positions 103-121 (AEEEAVWGDGSPEPSPREG) are excised as a propeptide. Residues 117 to 126 (SPREGKRSYS) show a composition bias toward basic and acidic residues. Ser-124 bears the N-acetylserine; in Corticotropin mark. Residue Val-136 is modified to Valine amide. Residue Asn-152 is glycosylated (N-linked (GlcNAc...) asparagine). Ser-154 is modified (phosphoserine). The segment at 179–210 (ESDAEKDDGPYRVEHFRWSNPPKDKRYGGFMT) is disordered. Positions 185 to 205 (DDGPYRVEHFRWSNPPKDKRY) are enriched in basic and acidic residues.

This sequence belongs to the POMC family. In terms of processing, specific enzymatic cleavages at paired basic residues yield the different active peptides. In terms of tissue distribution, ACTH and MSH are produced by the pituitary gland.

The protein localises to the secreted. Its function is as follows. Stimulates the adrenal glands to release cortisol. In terms of biological role, anorexigenic peptide. Increases the pigmentation of skin by increasing melanin production in melanocytes. Increases the pigmentation of skin by increasing melanin production in melanocytes. Functionally, endogenous orexigenic opiate. Its function is as follows. Endogenous opiate. This Mus musculus (Mouse) protein is Pro-opiomelanocortin (Pomc).